A 456-amino-acid chain; its full sequence is Bifunctional protein GlmU (456 aa).

Positions 1 to 229 (MLNSAMSVVI…LSEVEGVNNR (229 aa)) are pyrophosphorylase. Residues 11–14 (LAAG), Lys25, Gln76, 81–82 (GT), 103–105 (YGD), Gly140, Glu154, Asn169, and Asn227 each bind UDP-N-acetyl-alpha-D-glucosamine. Asp105 contributes to the Mg(2+) binding site. Asn227 is a Mg(2+) binding site. The segment at 230-250 (LQLSALERIYQREQADKLLLA) is linker. An N-acetyltransferase region spans residues 251–456 (GVMLLDPARF…SGWQRPVKKK (206 aa)). Residues Arg333 and Lys351 each contribute to the UDP-N-acetyl-alpha-D-glucosamine site. His363 functions as the Proton acceptor in the catalytic mechanism. Positions 366 and 377 each coordinate UDP-N-acetyl-alpha-D-glucosamine. Acetyl-CoA-binding positions include Ala380, 386–387 (NY), Ser405, Ala423, and Arg440.

In the N-terminal section; belongs to the N-acetylglucosamine-1-phosphate uridyltransferase family. This sequence in the C-terminal section; belongs to the transferase hexapeptide repeat family. Homotrimer. Requires Mg(2+) as cofactor.

The protein localises to the cytoplasm. It catalyses the reaction alpha-D-glucosamine 1-phosphate + acetyl-CoA = N-acetyl-alpha-D-glucosamine 1-phosphate + CoA + H(+). It carries out the reaction N-acetyl-alpha-D-glucosamine 1-phosphate + UTP + H(+) = UDP-N-acetyl-alpha-D-glucosamine + diphosphate. Its pathway is nucleotide-sugar biosynthesis; UDP-N-acetyl-alpha-D-glucosamine biosynthesis; N-acetyl-alpha-D-glucosamine 1-phosphate from alpha-D-glucosamine 6-phosphate (route II): step 2/2. It functions in the pathway nucleotide-sugar biosynthesis; UDP-N-acetyl-alpha-D-glucosamine biosynthesis; UDP-N-acetyl-alpha-D-glucosamine from N-acetyl-alpha-D-glucosamine 1-phosphate: step 1/1. It participates in bacterial outer membrane biogenesis; LPS lipid A biosynthesis. Functionally, catalyzes the last two sequential reactions in the de novo biosynthetic pathway for UDP-N-acetylglucosamine (UDP-GlcNAc). The C-terminal domain catalyzes the transfer of acetyl group from acetyl coenzyme A to glucosamine-1-phosphate (GlcN-1-P) to produce N-acetylglucosamine-1-phosphate (GlcNAc-1-P), which is converted into UDP-GlcNAc by the transfer of uridine 5-monophosphate (from uridine 5-triphosphate), a reaction catalyzed by the N-terminal domain. This is Bifunctional protein GlmU from Pectobacterium atrosepticum (strain SCRI 1043 / ATCC BAA-672) (Erwinia carotovora subsp. atroseptica).